The following is a 217-amino-acid chain: Dense granule protein 1 (217 aa).

Positions 1-19 are cleaved as a signal peptide; it reads MARQATFIVALCVCGLAIA. The segment covering 171-183 has biased composition (polar residues); that stretch reads VASEDSALGNSEE. Residues 171–217 are disordered; that stretch reads VASEDSALGNSEEQYVEGTVNGSSDPEQERAGGPLIPEGDEQEVDTE. The N-linked (GlcNAc...) asparagine glycan is linked to Asn-191. Acidic residues predominate over residues 208 to 217; it reads EGDEQEVDTE.

The protein belongs to the Gra7 family.

The protein localises to the secreted. The sequence is that of Dense granule protein 1 (DG1) from Neospora caninum (Coccidian parasite).